The sequence spans 416 residues: Protein-lysine N-trimethyltransferase SMYD5 (416 aa).

In terms of domain architecture, SET spans 21–351; the sequence is GSVEVRYVDS…PGEEICISYL (331 aa). The MYND-type zinc finger occupies 98 to 136; it reads PELCSVRKDLHQNCPHCQVMYCSAECRLAAAEQYHQILC. Residue Tyr350 coordinates S-adenosyl-L-methionine. The disordered stretch occupies residues 383 to 416; sequence EADDPNVTSEEEEEEDEEEGEPEDAELGDEMTDV.

It belongs to the class V-like SAM-binding methyltransferase superfamily. In terms of assembly, interacts with the N-CoR complex. Interacts with EHMT2 and CBX5. Post-translationally, ubiquitinated and degradaed by the proteasome in response to mild hypothermia (32 degrees Celsius), relieving repression of the SP1 gene.

It localises to the cytoplasm. The catalysed reaction is L-lysyl-[protein] + 3 S-adenosyl-L-methionine = N(6),N(6),N(6)-trimethyl-L-lysyl-[protein] + 3 S-adenosyl-L-homocysteine + 3 H(+). It catalyses the reaction L-lysyl(20)-[histone H4] + 3 S-adenosyl-L-methionine = N(6),N(6),N(6)-trimethyl-L-lysyl(20)-[histone H4] + 3 S-adenosyl-L-homocysteine + 3 H(+). It carries out the reaction L-lysyl(36)-[histone H3] + 3 S-adenosyl-L-methionine = N(6),N(6),N(6)-trimethyl-L-lysyl(36)-[histone H3] + 3 S-adenosyl-L-homocysteine + 3 H(+). Functionally, protein-lysine N-trimethyltransferase that specifically catalyzes trimethylation of 'Lys-22' of the RPL40/eL40 subunit of the 60S ribosome, thereby promoting translation elongation and protein synthesis. May also act as a histone methyltransferase in the context of histone octamers, but not on nucleosome substrates: trimethylates 'Lys-36' of histone H3 and 'Lys-20' of histone H4 to form H3K36me3 and H4K20me3, respectively. The histone methyltransferase activity, which is independent of its SET domain, is however unsure in vivo. In association with the NCoR corepressor complex, involved in the repression of toll-like receptor 4 (TLR4)-target inflammatory genes in macrophages, possibly by catalyzing the formation of H4K20me3 at the gene promoters. Plays an important role in embryonic stem (ES) cell self-renewal and differentiation. Maintains genome stability of ES cells during differentiation through regulation of heterochromatin formation and repression of endogenous repetitive DNA elements by promoting H4K20me3 marks. Acts as a regulator of the hypothermia response: its degradation in response to mild hypothermia relieves the formation of H3K36me3 at gene promoters, allowing expression of the neuroprotective gene SP1. The protein is Protein-lysine N-trimethyltransferase SMYD5 of Mus musculus (Mouse).